A 159-amino-acid chain; its full sequence is MAERPGPPGGAVSATAYPDTPAEFPPHLQAGAMRRRFWGVFNCLCAGSFGALAAASAKLAFGSEVSMGLCVLGIIVMASTNSLMWTFFSRGLSFSMSSAIASVTVTFSNILSSAFLGYVLYGECQEVLWWGGVFLILCGLTLIHRKLPPTWKPLPHKQQ.

The next 4 membrane-spanning stretches (helical) occupy residues 37–57, 59–79, 100–120, and 124–144; these read FWGV…AASA, LAFG…VMAS, IASV…GYVL, and CQEV…TLIH.

The protein localises to the membrane. This is Transmembrane protein 42 (TMEM42) from Pongo abelii (Sumatran orangutan).